The sequence spans 377 residues: tRNA-specific 2-thiouridylase MnmA (377 aa).

ATP-binding positions include 8–15 and methionine 34; that span reads GMSGGVDS. Residues 94–96 form an interaction with target base in tRNA region; that stretch reads NPD. The active-site Nucleophile is cysteine 99. A disulfide bridge links cysteine 99 with cysteine 201. Glycine 123 provides a ligand contact to ATP. An interaction with tRNA region spans residues 151–153; sequence KDQ. The Cysteine persulfide intermediate role is filled by cysteine 201. An interaction with tRNA region spans residues 315–316; the sequence is RY.

This sequence belongs to the MnmA/TRMU family.

It is found in the cytoplasm. The catalysed reaction is S-sulfanyl-L-cysteinyl-[protein] + uridine(34) in tRNA + AH2 + ATP = 2-thiouridine(34) in tRNA + L-cysteinyl-[protein] + A + AMP + diphosphate + H(+). Catalyzes the 2-thiolation of uridine at the wobble position (U34) of tRNA, leading to the formation of s(2)U34. The sequence is that of tRNA-specific 2-thiouridylase MnmA from Acinetobacter baumannii (strain SDF).